The primary structure comprises 383 residues: Lipid-A-disaccharide synthase (383 aa).

This sequence belongs to the LpxB family.

The enzyme catalyses 2-N,3-O-bis[(3R)-3-hydroxytetradecanoyl]-alpha-D-glucosaminyl 1-phosphate + UDP-2-N,3-O-bis[(3R)-3-hydroxytetradecanoyl]-alpha-D-glucosamine = lipid A disaccharide (E. coli) + UDP + H(+). It carries out the reaction a lipid X + a UDP-2-N,3-O-bis[(3R)-3-hydroxyacyl]-alpha-D-glucosamine = a lipid A disaccharide + UDP + H(+). It functions in the pathway glycolipid biosynthesis; lipid IV(A) biosynthesis; lipid IV(A) from (3R)-3-hydroxytetradecanoyl-[acyl-carrier-protein] and UDP-N-acetyl-alpha-D-glucosamine: step 5/6. Functionally, condensation of UDP-2,3-diacylglucosamine and 2,3-diacylglucosamine-1-phosphate to form lipid A disaccharide, a precursor of lipid A, a phosphorylated glycolipid that anchors the lipopolysaccharide to the outer membrane of the cell. The sequence is that of Lipid-A-disaccharide synthase from Klebsiella pneumoniae subsp. pneumoniae (strain ATCC 700721 / MGH 78578).